A 417-amino-acid polypeptide reads, in one-letter code: UDP-N-acetylmuramoylalanine--D-glutamate ligase (417 aa).

104–110 (GSNGKST) lines the ATP pocket.

It belongs to the MurCDEF family.

It is found in the cytoplasm. The catalysed reaction is UDP-N-acetyl-alpha-D-muramoyl-L-alanine + D-glutamate + ATP = UDP-N-acetyl-alpha-D-muramoyl-L-alanyl-D-glutamate + ADP + phosphate + H(+). Its pathway is cell wall biogenesis; peptidoglycan biosynthesis. Functionally, cell wall formation. Catalyzes the addition of glutamate to the nucleotide precursor UDP-N-acetylmuramoyl-L-alanine (UMA). The protein is UDP-N-acetylmuramoylalanine--D-glutamate ligase of Francisella tularensis subsp. novicida (strain U112).